We begin with the raw amino-acid sequence, 345 residues long: Tryptophan--tRNA ligase (345 aa).

Residues 21 to 23 (QPT) and 30 to 31 (GN) contribute to the ATP site. Positions 22–31 (PTADSYHLGN) match the 'HIGH' region motif. Aspartate 147 provides a ligand contact to L-tryptophan. ATP-binding positions include 159 to 161 (GED), isoleucine 198, and 207 to 211 (KMSKS). The 'KMSKS' region motif lies at 207–211 (KMSKS).

The protein belongs to the class-I aminoacyl-tRNA synthetase family. Homodimer.

The protein resides in the cytoplasm. The catalysed reaction is tRNA(Trp) + L-tryptophan + ATP = L-tryptophyl-tRNA(Trp) + AMP + diphosphate + H(+). Catalyzes the attachment of tryptophan to tRNA(Trp). This is Tryptophan--tRNA ligase from Corynebacterium glutamicum (strain ATCC 13032 / DSM 20300 / JCM 1318 / BCRC 11384 / CCUG 27702 / LMG 3730 / NBRC 12168 / NCIMB 10025 / NRRL B-2784 / 534).